Consider the following 216-residue polypeptide: Adenylate kinase (216 aa).

10–15 is a binding site for ATP; sequence GAGKGT. Positions 30–59 are NMP; it reads STGDIFRANIKEKTPLGIEAKRYIDNGQLV. AMP contacts are provided by residues T31, R36, 57–59, 85–88, and Q92; these read QLV and GFPR. Positions 126-163 are LID; it reads GRRVCTSCGASYHIRFNPPKIEGKCDICDNELIQRKDD. R127 serves as a coordination point for ATP. The Zn(2+) site is built by C130 and C133. An ATP-binding site is contributed by 136–137; sequence SY. Zn(2+)-binding residues include C150 and C153. AMP contacts are provided by R160 and R171. E199 lines the ATP pocket.

It belongs to the adenylate kinase family. In terms of assembly, monomer.

The protein localises to the cytoplasm. It catalyses the reaction AMP + ATP = 2 ADP. The protein operates within purine metabolism; AMP biosynthesis via salvage pathway; AMP from ADP: step 1/1. In terms of biological role, catalyzes the reversible transfer of the terminal phosphate group between ATP and AMP. Plays an important role in cellular energy homeostasis and in adenine nucleotide metabolism. The chain is Adenylate kinase from Clostridium botulinum (strain 657 / Type Ba4).